Reading from the N-terminus, the 245-residue chain is MKKVLAKITYDGSLYYGFQIQPKKPTIQGEIEKVLEKISKTKIKIHSAGRTDKGVHARGQIISFYIKINIKLKNLKTAINSLLKDDIRIIKLKYVEDKFQPRFDAKRRKYSYYILNNENHYPWEGYRAYYVKKKLNINRLNEMAEMLIGIHDFTTFSCIRDQTNSKLKEIYYARFKKKNKFIIFEIIGSSFLWKMVRSIVGVMIDIEIKNEPVDTFKKILNSKNRKLTRKTAPAKALFLDKVFYE.

Asp52 acts as the Nucleophile in catalysis. Tyr110 lines the substrate pocket.

It belongs to the tRNA pseudouridine synthase TruA family. As to quaternary structure, homodimer.

The catalysed reaction is uridine(38/39/40) in tRNA = pseudouridine(38/39/40) in tRNA. Functionally, formation of pseudouridine at positions 38, 39 and 40 in the anticodon stem and loop of transfer RNAs. The chain is tRNA pseudouridine synthase A from Borrelia turicatae (strain 91E135).